Here is a 44-residue protein sequence, read N- to C-terminus: Photosystem I reaction center subunit IX (44 aa).

A helical transmembrane segment spans residues 7–27 (YLSVAPVVSTLWFAALAGLLI).

Belongs to the PsaJ family.

It is found in the plastid. The protein localises to the chloroplast thylakoid membrane. Its function is as follows. May help in the organization of the PsaE and PsaF subunits. The protein is Photosystem I reaction center subunit IX of Lotus japonicus (Lotus corniculatus var. japonicus).